Consider the following 126-residue polypeptide: Large ribosomal subunit protein bL12 (126 aa).

The protein belongs to the bacterial ribosomal protein bL12 family. As to quaternary structure, homodimer. Part of the ribosomal stalk of the 50S ribosomal subunit. Forms a multimeric L10(L12)X complex, where L10 forms an elongated spine to which 2 to 4 L12 dimers bind in a sequential fashion. Binds GTP-bound translation factors.

Its function is as follows. Forms part of the ribosomal stalk which helps the ribosome interact with GTP-bound translation factors. Is thus essential for accurate translation. This chain is Large ribosomal subunit protein bL12, found in Saccharophagus degradans (strain 2-40 / ATCC 43961 / DSM 17024).